The following is a 541-amino-acid chain: Carboxypeptidase Y homolog A (541 aa).

Positions 1–17 (MKLLMTGLLASAAVAAA) are cleaved as a signal peptide. Residues 18–122 (QEQQVLQAEG…KLQSYDLRVK (105 aa)) constitute a propeptide that is removed on maturation. 5 disulfides stabilise this stretch: C177–C417, C311–C325, C335–C358, C342–C351, and C380–C387. N-linked (GlcNAc...) asparagine glycosylation is present at N208. Residue S264 is part of the active site. The active site involves D456. N-linked (GlcNAc...) asparagine glycosylation is present at N507. H518 is an active-site residue.

It belongs to the peptidase S10 family.

Its subcellular location is the vacuole. The catalysed reaction is Release of a C-terminal amino acid with broad specificity.. Its function is as follows. Vacuolar carboxypeptidase involved in degradation of small peptides. Digests preferentially peptides containing an aliphatic or hydrophobic residue in P1' position, as well as methionine, leucine or phenylalanine in P1 position of ester substrate. The polypeptide is Carboxypeptidase Y homolog A (CPYA) (Arthroderma otae (strain ATCC MYA-4605 / CBS 113480) (Microsporum canis)).